The chain runs to 909 residues: Alanine--tRNA ligase (909 aa).

The Zn(2+) site is built by histidine 600, histidine 604, cysteine 704, and histidine 708.

It belongs to the class-II aminoacyl-tRNA synthetase family. Zn(2+) serves as cofactor.

It is found in the cytoplasm. The enzyme catalyses tRNA(Ala) + L-alanine + ATP = L-alanyl-tRNA(Ala) + AMP + diphosphate. Its function is as follows. Catalyzes the attachment of alanine to tRNA(Ala) in a two-step reaction: alanine is first activated by ATP to form Ala-AMP and then transferred to the acceptor end of tRNA(Ala). Also edits incorrectly charged Ser-tRNA(Ala) and Gly-tRNA(Ala) via its editing domain. This chain is Alanine--tRNA ligase, found in Staphylothermus marinus (strain ATCC 43588 / DSM 3639 / JCM 9404 / F1).